Here is a 1158-residue protein sequence, read N- to C-terminus: ATP-dependent helicase/deoxyribonuclease subunit B (1158 aa).

The 275-residue stretch at 1–275 folds into the UvrD-like helicase ATP-binding domain; it reads MTLHAYLGRA…QYFNQLYRFN (275 aa). Residue 8–15 coordinates ATP; it reads GRAGTGKS. A UvrD-like helicase C-terminal domain is found at 269–583; sequence NQLYRFNNQD…SIGTMDLAKV (315 aa). Cysteine 784, cysteine 1112, cysteine 1115, and cysteine 1121 together coordinate [4Fe-4S] cluster.

The protein belongs to the helicase family. AddB/RexB type 1 subfamily. In terms of assembly, heterodimer of AddA and AddB. It depends on Mg(2+) as a cofactor. [4Fe-4S] cluster serves as cofactor.

In terms of biological role, the heterodimer acts as both an ATP-dependent DNA helicase and an ATP-dependent, dual-direction single-stranded exonuclease. Recognizes the chi site generating a DNA molecule suitable for the initiation of homologous recombination. The AddB subunit has 5' -&gt; 3' nuclease activity but not helicase activity. The polypeptide is ATP-dependent helicase/deoxyribonuclease subunit B (Staphylococcus aureus (strain COL)).